A 138-amino-acid polypeptide reads, in one-letter code: Transcription antitermination protein NusB (138 aa).

It belongs to the NusB family.

Involved in transcription antitermination. Required for transcription of ribosomal RNA (rRNA) genes. Binds specifically to the boxA antiterminator sequence of the ribosomal RNA (rrn) operons. This Leptospira borgpetersenii serovar Hardjo-bovis (strain JB197) protein is Transcription antitermination protein NusB.